The sequence spans 328 residues: Olfactory receptor 13A1 (328 aa).

Topologically, residues 1–43 (MKLWMESHLIVPETRPSPRMMSNQTLVTEFILQGFSEHPEYRV) are extracellular. N23 carries an N-linked (GlcNAc...) asparagine glycan. A helical membrane pass occupies residues 44 to 64 (FLFSCFLFLYSGALTGNVLIT). The Cytoplasmic segment spans residues 65–72 (LAITFNPG). The chain crosses the membrane as a helical span at residues 73–93 (LHAPMYFFLLNLATMDIICTS). Residues 94 to 117 (SIMPKALASLVSEESSISYGGCMA) lie on the Extracellular side of the membrane. Cysteines 115 and 207 form a disulfide. A helical membrane pass occupies residues 118-138 (QLYFLTWAASSELLLLTVMAY). Over 139 to 157 (DRYAAICHPLHYSSMMSKV) the chain is Cytoplasmic. The chain crosses the membrane as a helical span at residues 158-178 (FCSGLATAVWLLCAVNTAIHT). At 179-215 (GLMLRLDFCGPNVIIHFFCEVPPLLLLSCSSTYVNGV) the chain is on the extracellular side. A helical membrane pass occupies residues 216–235 (MIVLADAFYGIVNFLMTIAS). Residues 236 to 255 (YGFIVSSILKVKTAWGRQKA) lie on the Cytoplasmic side of the membrane. A helical transmembrane segment spans residues 256-276 (FSTCSSHLTVVCMYYTAVFYA). Residues 277-289 (YISPVSGYSAGKS) are Extracellular-facing. The chain crosses the membrane as a helical span at residues 290–310 (KLAGLLYTVLSPTLNPLIYTL). Residues 311–328 (RNKEVKAALRKLFPFFRN) lie on the Cytoplasmic side of the membrane.

Belongs to the G-protein coupled receptor 1 family.

The protein localises to the cell membrane. Functionally, odorant receptor. This Homo sapiens (Human) protein is Olfactory receptor 13A1 (OR13A1).